The sequence spans 100 residues: UPF0045 protein MJ1052 (100 aa).

Belongs to the UPF0045 family.

In Methanocaldococcus jannaschii (strain ATCC 43067 / DSM 2661 / JAL-1 / JCM 10045 / NBRC 100440) (Methanococcus jannaschii), this protein is UPF0045 protein MJ1052.